Consider the following 269-residue polypeptide: Regulatory protein RecX (269 aa).

Belongs to the RecX family.

The protein localises to the cytoplasm. Functionally, modulates RecA activity. This is Regulatory protein RecX from Listeria welshimeri serovar 6b (strain ATCC 35897 / DSM 20650 / CCUG 15529 / CIP 8149 / NCTC 11857 / SLCC 5334 / V8).